The following is a 417-amino-acid chain: UPF0761 membrane protein CV_0810 (417 aa).

7 helical membrane passes run 52 to 72, 79 to 99, 110 to 130, 150 to 170, 185 to 205, 214 to 234, and 258 to 278; these read LLALVPLFTIALSVISAFPVF, FKIMLLSTLVPEFAGKVITVY, LTAAGIVMLGVTALMLMSTIE, MVYWTVLTLGPLVLGGSLLSW, LLASVLEAGGTIVLTALVLAL, FVPFRHAVWGALVTSVLLELT, and IPIFLLWVYCLWLVVLAGAVF.

It belongs to the UPF0761 family.

Its subcellular location is the cell inner membrane. The chain is UPF0761 membrane protein CV_0810 from Chromobacterium violaceum (strain ATCC 12472 / DSM 30191 / JCM 1249 / CCUG 213 / NBRC 12614 / NCIMB 9131 / NCTC 9757 / MK).